The following is an 88-amino-acid chain: MKLTLIILLVVAYSWCSEAQNEARVFCGRVLSERLAALCWGPNSVKRDAGWWLTRGAARSLGGVRGKRGLATECCDKACTVEELLSYC.

An N-terminal signal peptide occupies residues 1 to 19; the sequence is MKLTLIILLVVAYSWCSEA. The propeptide occupies 20-45; sequence QNEARVFCGRVLSERLAALCWGPNSV. R65 is subject to Arginine amide. The propeptide occupies 69 to 88; that stretch reads GLATECCDKACTVEELLSYC.

The protein belongs to the insulin family. DAGWWLTRGAARSLGGVR-amide: Expressed in corpora cardiaca (CC), corpora allata (CA), antennal lobe (AL) and gnathal ganglion (GNG) (at protein level). Expression in CC and CA detected in most animals, in AL and GNG in few animals (at protein level).

The protein resides in the secreted. The protein is Insulin-related peptide 4 of Agrotis ipsilon (Black cutworm moth).